The primary structure comprises 161 residues: Thy-1 membrane glycoprotein (161 aa).

Residues 1–19 (MNPVISITLLLSVLQMSRG) form the signal peptide. Q20 is modified (pyrrolidone carboxylic acid). The Ig-like V-type domain occupies 20–126 (QRVISLTACL…NKTINVIRDK (107 aa)). 2 cysteine pairs are disulfide-bonded: C28–C130 and C38–C104. The N-linked (GlcNAc...) (complex) asparagine; alternate glycan is linked to N42. The N-linked (GlcNAc...) (high mannose) asparagine; alternate glycan is linked to N42. A glycan (N-linked (GlcNAc...) asparagine; alternate) is linked at N42. S82 bears the Phosphoserine mark. N93 carries an N-linked (GlcNAc...) (complex) asparagine; alternate glycan. N93 carries an N-linked (GlcNAc...) asparagine; alternate glycan. N117 carries an N-linked (GlcNAc...) (high mannose) asparagine; in brain; alternate glycan. The N-linked (GlcNAc...) (hybrid) asparagine; in brain; alternate glycan is linked to N117. Residue C130 is the site of GPI-anchor amidated cysteine attachment. A propeptide spans 131 to 161 (GGISLLVQNTSWLLLLLLSLSFLQATDFISL) (removed in mature form).

Post-translationally, glycosylation is tissue specific. Sialylation of N-glycans at Asn-93 in brain and at Asn-42, Asn-93 and Asn-117 in thymus. Abundant in lymphoid tissues.

It is found in the cell membrane. May play a role in cell-cell or cell-ligand interactions during synaptogenesis and other events in the brain. This chain is Thy-1 membrane glycoprotein (Thy1), found in Rattus norvegicus (Rat).